Consider the following 403-residue polypeptide: Metacaspase-1 (403 aa).

The interval 1 to 95 is disordered; sequence MFPGSGHNTY…PSGSQSFGQN (95 aa). A compositionally biased stretch (pro residues) spans 13 to 22; sequence YPPPQGPPPN. Low complexity-rich tracts occupy residues 23 to 34 and 49 to 62; these read NNGYNSGPNNSY and QYDQ…QSQP. Active-site residues include His-193 and Cys-249.

Belongs to the peptidase C14B family.

In terms of biological role, involved in cell death (apoptosis). The chain is Metacaspase-1 (MCA1) from Scheffersomyces stipitis (strain ATCC 58785 / CBS 6054 / NBRC 10063 / NRRL Y-11545) (Yeast).